Reading from the N-terminus, the 44-residue chain is M-factor (44 aa).

A propeptide spanning residues 1–32 is cleaved from the precursor; that stretch reads MDSIATNTHSSSIVNAYNNNPTDVVKTQNIKN. Position 41 is a cysteine methyl ester (C41). A lipid anchor (S-farnesyl cysteine) is attached at C41. A propeptide spans 42-44 (removed in mature form); the sequence is VIA.

It localises to the secreted. Its function is as follows. M-factor is a mating pheromone produced by M-type mating cells. All three mfm genes contribute to the production of M-factor. In Schizosaccharomyces pombe (strain 972 / ATCC 24843) (Fission yeast), this protein is M-factor (mfm2).